Here is a 185-residue protein sequence, read N- to C-terminus: Large ribosomal subunit protein uL5 (185 aa).

Belongs to the universal ribosomal protein uL5 family. In terms of assembly, part of the 50S ribosomal subunit; part of the 5S rRNA/L5/L18/L25 subcomplex. Contacts the 5S rRNA and the P site tRNA. Forms a bridge to the 30S subunit in the 70S ribosome.

Functionally, this is one of the proteins that bind and probably mediate the attachment of the 5S RNA into the large ribosomal subunit, where it forms part of the central protuberance. In the 70S ribosome it contacts protein S13 of the 30S subunit (bridge B1b), connecting the 2 subunits; this bridge is implicated in subunit movement. Contacts the P site tRNA; the 5S rRNA and some of its associated proteins might help stabilize positioning of ribosome-bound tRNAs. The chain is Large ribosomal subunit protein uL5 from Nitrobacter winogradskyi (strain ATCC 25391 / DSM 10237 / CIP 104748 / NCIMB 11846 / Nb-255).